The primary structure comprises 551 residues: Interferon-induced, double-stranded RNA-activated protein kinase (551 aa).

N-acetylalanine is present on alanine 2. A (Microbial infection) Interaction with HCV NS5A region spans residues 2 to 180 (AGDLSAGFFM…SVKSDYLSSG (179 aa)). In terms of domain architecture, DRBM 1 spans 9-77 (FFMEELNTYR…AKLAVEILNK (69 aa)). A Glycyl lysine isopeptide (Lys-Gly) (interchain with G-Cter in ISG15) cross-link involves residue lysine 69. Serine 83 is modified (phosphoserine). 3 positions are modified to phosphothreonine; by autocatalysis: threonine 88, threonine 89, and threonine 90. One can recognise a DRBM 2 domain in the interval 100 to 167 (NYIGLINRIA…AKLAYLQILS (68 aa)). At tyrosine 101 the chain carries Phosphotyrosine; by autocatalysis. Lysine 159 participates in a covalent cross-link: Glycyl lysine isopeptide (Lys-Gly) (interchain with G-Cter in ISG15). The residue at position 162 (tyrosine 162) is a Phosphotyrosine; by autocatalysis. Polar residues predominate over residues 202 to 215 (SSSEGDFSADTSEI). Residues 202–222 (SSSEGDFSADTSEINSNSDSL) form a disordered region. Phosphoserine; by autocatalysis is present on serine 242. 2 positions are modified to phosphothreonine; by autocatalysis: threonine 255 and threonine 258. A dimerization region spans residues 266-362 (DFKEIELIGS…NSSRSKTKCL (97 aa)). Positions 266–551 (DFKEIELIGS…SPEKNERHTC (286 aa)) are interaction with TRAF5. Positions 267–538 (FKEIELIGSG…TSEILRTLTV (272 aa)) constitute a Protein kinase domain. 273–281 (IGSGGFGQV) provides a ligand contact to ATP. Tyrosine 293 carries the phosphotyrosine; by autocatalysis modification. An ATP-binding site is contributed by lysine 296. Repeat copies occupy residues 331 to 343 (DYDPETSDDSLES) and 345 to 357 (DYDPENSKNSSRS). The 2 X 13 AA approximate repeats stretch occupies residues 331-357 (DYDPETSDDSLESSDYDPENSKNSSRS). Residues 379–496 (EKRRGEKLDK…TAFETSKFFT (118 aa)) are interaction with EIF2S1/EIF-2ALPHA. Aspartate 414 functions as the Proton acceptor in the catalytic mechanism. Aspartate 432 is a binding site for Mg(2+). 2 positions are modified to phosphothreonine; by autocatalysis: threonine 446 and threonine 451. Serine 456 and serine 542 each carry phosphoserine.

This sequence belongs to the protein kinase superfamily. Ser/Thr protein kinase family. GCN2 subfamily. In terms of assembly, homodimer. Interacts with STRBP. Interacts with DNAJC3. Forms a complex with FANCA, FANCC, FANCG and HSP70. Interacts with ADAR/ADAR1. Interacts with IRS1. The inactive form interacts with NCK1 and GSN. Interacts (via the kinase catalytic domain) with STAT3 (via SH2 domain), TRAF2 (C-terminus), TRAF5 (C-terminus) and TRAF6 (C-terminus). Interacts with MAP2K6, IKBKB/IKKB, NPM1, TARBP2, NLRP1, NLRP3, NLRC4 and AIM2. Interacts (via DRBM 1 domain) with DUS2L (via DRBM domain). Interacts with DHX9 (via N-terminus) and this interaction is dependent upon activation of the kinase. Interacts with EIF2S1/EIF-2ALPHA; this interaction induces a conformational change in EIF2S1 and its phosphorylation by EIF2AK2. (Microbial infection) Interacts with human cytomegalovirus (HCMV) TRS1; this interaction retains EIF2AK2 to the nucleus and prevents its activation. As to quaternary structure, (Microbial infection) Interacts with vaccinia virus protein K3 (K3L); this interaction inhibits EIF2AK2. In terms of assembly, (Microbial infection) Interacts with human herpes simplex virus 1 (HHV-1) protein US11 in an RNA-dependent manner. (Microbial infection) The inactive form interacts with Toscana virus (TOS) NSS. As to quaternary structure, (Microbial infection) Interacts with herpes virus 8 protein v-IRF2; this interaction inhibits EIF2AK2 activation. In terms of assembly, (Microbial infection) Interacts with vaccinia protein E3. (Microbial infection) Interacts (via N-terminus) with Hepatitis C virus (HCV) mature core protein (via N-terminus); this interaction induces the autophosphorylation of EIF2AK2. As to quaternary structure, (Microbial infection) Interacts with Hepatitis C virus (HCV) non-structural protein 5A (NS5A); this interaction leads to disruption of EIF2AK2 dimerization by NS5A. In terms of assembly, (Microbial infection) Interacts with Hepatitis C virus (HCV) envelope glycoprotein E2; this interaction inhibits EIF2AK2 and blocks its inhibitory effect on protein synthesis and cell growth. (Microbial infection) Interacts with human respiratory syncytial virus (HRSV) nucleoprotein; this interaction inhibits EIF2AK2 phosphorylation of EIF2S1 and blocks EIF2AK2-mediated translation shutoff. As to quaternary structure, (Microbial infection) Interacts with human herpesvirus 8 protein MTA/ORF57; this interaction inhibits stress granule formation. The cofactor is Mg(2+). Autophosphorylated on several Ser, Thr and Tyr residues. Autophosphorylation of Thr-451 is dependent on Thr-446 and is stimulated by dsRNA binding and dimerization. Autophosphorylation apparently leads to the activation of the kinase. Tyrosine autophosphorylation is essential for efficient dsRNA-binding, dimerization, and kinase activation. As to expression, highly expressed in thymus, spleen and bone marrow compared to non-hematopoietic tissues such as small intestine, liver, or kidney tissues. Colocalizes with GSK3B and TAU in the Alzheimer disease (AD) brain. Elevated levels seen in breast and colon carcinomas, and which correlates with tumor progression and invasiveness or risk of progression.

Its subcellular location is the cytoplasm. It is found in the nucleus. It localises to the perinuclear region. The catalysed reaction is L-seryl-[protein] + ATP = O-phospho-L-seryl-[protein] + ADP + H(+). The enzyme catalyses L-threonyl-[protein] + ATP = O-phospho-L-threonyl-[protein] + ADP + H(+). It catalyses the reaction L-tyrosyl-[protein] + ATP = O-phospho-L-tyrosyl-[protein] + ADP + H(+). Its activity is regulated as follows. Initially produced in an inactive form and is activated by binding to viral dsRNA, which causes dimerization and autophosphorylation in the activation loop and stimulation of function. ISGylation can activate it in the absence of viral infection. Can also be activated by heparin, pro-inflammatory stimuli, growth factors, cytokines, oxidative stress and the cellular protein PRKRA. Activity is markedly stimulated by manganese ions. Activation is blocked by the viral components HIV-1 Tat protein and large amounts of HIV-1 trans-activation response (TAR) RNA element as well as by the cellular proteins TARBP2, DUS2L, NPM1, NCK1 and ADAR. Down-regulated by Toscana virus (TOS) and Rift valley fever virus (RVFV) NSS which promote its proteasomal degradation. Inhibited by vaccinia virus protein E3, probably via dsRNA sequestering. Functionally, IFN-induced dsRNA-dependent serine/threonine-protein kinase that phosphorylates the alpha subunit of eukaryotic translation initiation factor 2 (EIF2S1/eIF-2-alpha) and plays a key role in the innate immune response to viral infection. Inhibits viral replication via the integrated stress response (ISR): EIF2S1/eIF-2-alpha phosphorylation in response to viral infection converts EIF2S1/eIF-2-alpha in a global protein synthesis inhibitor, resulting to a shutdown of cellular and viral protein synthesis, while concomitantly initiating the preferential translation of ISR-specific mRNAs, such as the transcriptional activator ATF4. Exerts its antiviral activity on a wide range of DNA and RNA viruses including hepatitis C virus (HCV), hepatitis B virus (HBV), measles virus (MV) and herpes simplex virus 1 (HHV-1). Also involved in the regulation of signal transduction, apoptosis, cell proliferation and differentiation: phosphorylates other substrates including p53/TP53, PPP2R5A, DHX9, ILF3, IRS1 and the HHV-1 viral protein US11. In addition to serine/threonine-protein kinase activity, also has tyrosine-protein kinase activity and phosphorylates CDK1 at 'Tyr-4' upon DNA damage, facilitating its ubiquitination and proteasomal degradation. Either as an adapter protein and/or via its kinase activity, can regulate various signaling pathways (p38 MAP kinase, NF-kappa-B and insulin signaling pathways) and transcription factors (JUN, STAT1, STAT3, IRF1, ATF3) involved in the expression of genes encoding pro-inflammatory cytokines and IFNs. Activates the NF-kappa-B pathway via interaction with IKBKB and TRAF family of proteins and activates the p38 MAP kinase pathway via interaction with MAP2K6. Can act as both a positive and negative regulator of the insulin signaling pathway (ISP). Negatively regulates ISP by inducing the inhibitory phosphorylation of insulin receptor substrate 1 (IRS1) at 'Ser-312' and positively regulates ISP via phosphorylation of PPP2R5A which activates FOXO1, which in turn up-regulates the expression of insulin receptor substrate 2 (IRS2). Can regulate NLRP3 inflammasome assembly and the activation of NLRP3, NLRP1, AIM2 and NLRC4 inflammasomes. Plays a role in the regulation of the cytoskeleton by binding to gelsolin (GSN), sequestering the protein in an inactive conformation away from actin. The chain is Interferon-induced, double-stranded RNA-activated protein kinase (EIF2AK2) from Homo sapiens (Human).